Here is a 409-residue protein sequence, read N- to C-terminus: MGRDILIGFVGKPSSGKSTMLNALTDATAKTGNFPFTTIEPNRAIGYAQIECACSRFGLQDKCKPIYGGCKNGVRSIPIQLLDVAGLIPGAHAGKGLGNKFLDDLRHADALVHVVDVSGTTDAEGKVCRGYDPSVDIAWLYKEITAWIGNNLREKWPNIVRRHIATKANPVNTLQSQFSGYGSTPAVTAKVLDSLHLDTPLEKWDDDTIEKVVNRFVDIKFPTVIALNKIDHPDADANISKIARKEDPNRLVLASAISEVFLRRLAKQGFVKYEEGSEFVDTLDDFPDSGLKPLSENLKTRIADLQDMVLFRHGSTGVCNVLAKAMELLNLIPVFPVKNVHNFANSPNEGVFRDCILVKQGTTAGQVSQMVLGGEAMSIVGVNGNVGESDVIVPGKTDILHFRLRKAEA.

The OBG-type G domain occupies 5-274 (ILIGFVGKPS…LAKQGFVKYE (270 aa)). Residues 11–18 (GKPSSGKS) and 83–87 (DVAGL) each bind GTP.

Belongs to the TRAFAC class OBG-HflX-like GTPase superfamily. OBG GTPase family.

The protein localises to the cytoplasm. Its subcellular location is the nucleus. This is an uncharacterized protein from Schizosaccharomyces pombe (strain 972 / ATCC 24843) (Fission yeast).